The primary structure comprises 136 residues: uncharacterized protein (136 aa).

Widely expressed.

This is an uncharacterized protein from Homo sapiens (Human).